A 245-amino-acid polypeptide reads, in one-letter code: Sugar fermentation stimulation protein homolog (245 aa).

This sequence belongs to the SfsA family.

The polypeptide is Sugar fermentation stimulation protein homolog (Rhodospirillum rubrum (strain ATCC 11170 / ATH 1.1.1 / DSM 467 / LMG 4362 / NCIMB 8255 / S1)).